We begin with the raw amino-acid sequence, 469 residues long: 3-isopropylmalate dehydratase large subunit (469 aa).

[4Fe-4S] cluster contacts are provided by C350, C410, and C413.

This sequence belongs to the aconitase/IPM isomerase family. LeuC type 1 subfamily. Heterodimer of LeuC and LeuD. It depends on [4Fe-4S] cluster as a cofactor.

It carries out the reaction (2R,3S)-3-isopropylmalate = (2S)-2-isopropylmalate. The protein operates within amino-acid biosynthesis; L-leucine biosynthesis; L-leucine from 3-methyl-2-oxobutanoate: step 2/4. Functionally, catalyzes the isomerization between 2-isopropylmalate and 3-isopropylmalate, via the formation of 2-isopropylmaleate. The chain is 3-isopropylmalate dehydratase large subunit from Rhizobium etli (strain ATCC 51251 / DSM 11541 / JCM 21823 / NBRC 15573 / CFN 42).